Here is a 160-residue protein sequence, read N- to C-terminus: Eukaryotic translation initiation factor 5A-4 (160 aa).

The segment covering 1-12 (MSDEEHHFESKA) has biased composition (basic and acidic residues). A disordered region spans residues 1-21 (MSDEEHHFESKADAGASKTYP). K52 is subject to Hypusine.

It belongs to the eIF-5A family. Post-translationally, lys-52 undergoes hypusination, a unique post-translational modification that consists in the addition of a butylamino group from spermidine to lysine side chain, leading to the formation of the unusual amino acid hypusine. eIF-5As are the only known proteins to undergo this modification, which is essential for their function.

Translation factor that promotes translation elongation and termination, particularly upon ribosome stalling at specific amino acid sequence contexts. Binds between the exit (E) and peptidyl (P) site of the ribosome and promotes rescue of stalled ribosome: specifically required for efficient translation of polyproline-containing peptides as well as other motifs that stall the ribosome. Acts as a ribosome quality control (RQC) cofactor by joining the RQC complex to facilitate peptidyl transfer during CAT tailing step. In Solanum lycopersicum (Tomato), this protein is Eukaryotic translation initiation factor 5A-4.